A 667-amino-acid chain; its full sequence is Glycine--tRNA ligase beta subunit (667 aa).

It belongs to the class-II aminoacyl-tRNA synthetase family. In terms of assembly, tetramer of two alpha and two beta subunits.

It is found in the cytoplasm. The catalysed reaction is tRNA(Gly) + glycine + ATP = glycyl-tRNA(Gly) + AMP + diphosphate. The polypeptide is Glycine--tRNA ligase beta subunit (Rickettsia canadensis (strain McKiel)).